The primary structure comprises 320 residues: Protein U25 (320 aa).

This sequence belongs to the herpesviridae US22 family.

In Human herpesvirus 7 (strain JI) (HHV-7), this protein is Protein U25 (U25).